Reading from the N-terminus, the 448-residue chain is Adenylosuccinate synthetase (448 aa).

Residues 22–28 (GDEGKGK) and 50–52 (GHT) each bind GTP. The active-site Proton acceptor is the Asp-23. Positions 23 and 50 each coordinate Mg(2+). IMP-binding positions include 23–26 (DEGK), 48–51 (NAGH), Thr-139, Arg-153, Gln-234, Thr-249, and Arg-321. Residue His-51 is the Proton donor of the active site. Residue 317–323 (SVTGRPR) coordinates substrate. Residues Arg-323, 349-351 (KLD), and 431-433 (STG) contribute to the GTP site.

The protein belongs to the adenylosuccinate synthetase family. As to quaternary structure, homodimer. Requires Mg(2+) as cofactor.

The protein localises to the cytoplasm. It carries out the reaction IMP + L-aspartate + GTP = N(6)-(1,2-dicarboxyethyl)-AMP + GDP + phosphate + 2 H(+). The protein operates within purine metabolism; AMP biosynthesis via de novo pathway; AMP from IMP: step 1/2. In terms of biological role, plays an important role in the de novo pathway of purine nucleotide biosynthesis. Catalyzes the first committed step in the biosynthesis of AMP from IMP. The polypeptide is Adenylosuccinate synthetase (Paraburkholderia phymatum (strain DSM 17167 / CIP 108236 / LMG 21445 / STM815) (Burkholderia phymatum)).